Reading from the N-terminus, the 296-residue chain is Acetylglutamate kinase (296 aa).

Residues 69 to 70 (GG), arginine 91, and asparagine 193 contribute to the substrate site.

This sequence belongs to the acetylglutamate kinase family. ArgB subfamily.

It localises to the cytoplasm. It catalyses the reaction N-acetyl-L-glutamate + ATP = N-acetyl-L-glutamyl 5-phosphate + ADP. Its pathway is amino-acid biosynthesis; L-arginine biosynthesis; N(2)-acetyl-L-ornithine from L-glutamate: step 2/4. In terms of biological role, catalyzes the ATP-dependent phosphorylation of N-acetyl-L-glutamate. In Albidiferax ferrireducens (strain ATCC BAA-621 / DSM 15236 / T118) (Rhodoferax ferrireducens), this protein is Acetylglutamate kinase.